The primary structure comprises 1288 residues: Contactin-associated protein-like 3 (1288 aa).

The N-terminal stretch at 1–25 (MASVAWAVLKVLLLLPTQTWSPVGA) is a signal peptide. At 26 to 1245 (GNPPDCDAPL…LVNADRRDSA (1220 aa)) the chain is on the extracellular side. Residues 31–177 (CDAPLASALP…IGMRIEVYGC (147 aa)) form the F5/8 type C domain. Residues cysteine 31 and cysteine 177 are joined by a disulfide bond. 2 Laminin G-like domains span residues 183-364 (VVYF…SFSC) and 370-545 (VPVT…IDSC). Residues asparagine 285, asparagine 359, asparagine 441, and asparagine 497 are each glycosylated (N-linked (GlcNAc...) asparagine). Cysteine 332 and cysteine 364 are joined by a disulfide. Intrachain disulfides connect cysteine 513–cysteine 545, cysteine 551–cysteine 562, cysteine 556–cysteine 571, and cysteine 573–cysteine 583. One can recognise an EGF-like 1 domain in the interval 551–583 (CLPSYCEHGGECSQSWDTFSCDCLGTGYTGETC). Residues 584 to 792 (HSSLYEQSCE…LLCRGDQSFW (209 aa)) form the Fibrinogen C-terminal domain. 2 N-linked (GlcNAc...) asparagine glycosylation sites follow: asparagine 623 and asparagine 706. The 166-residue stretch at 793-958 (NSASFNTETS…TVTPGVEPGC (166 aa)) folds into the Laminin G-like 3 domain. 4 cysteine pairs are disulfide-bonded: cysteine 931/cysteine 958, cysteine 962/cysteine 975, cysteine 969/cysteine 984, and cysteine 986/cysteine 996. In terms of domain architecture, EGF-like 2 spans 962–996 (CSTYGHLCRNGGRCREKRRGVTCDCAFSAYDGPFC). The Laminin G-like 4 domain maps to 1015-1203 (QEHYTLSENS…RGHVAPMARC (189 aa)). N-linked (GlcNAc...) asparagine glycans are attached at residues asparagine 1023, asparagine 1073, and asparagine 1120. Cysteine 1167 and cysteine 1203 are oxidised to a cystine. The tract at residues 1215 to 1236 (ELAPRLAGGAGRSGPADEGEPL) is disordered. The helical transmembrane segment at 1246-1266 (VIGGVIAVVIFILLCITAIAI) threads the bilayer. Topologically, residues 1267–1288 (RIYQQRKLRKENESKVSKKEEC) are cytoplasmic.

The protein belongs to the neurexin family.

It localises to the cell membrane. Its subcellular location is the secreted. The sequence is that of Contactin-associated protein-like 3 (CNTNAP3) from Homo sapiens (Human).